The chain runs to 359 residues: 3-isopropylmalate dehydrogenase (359 aa).

Substrate is bound by residues Arg96, Arg106, Arg134, and Asp223. Mg(2+) contacts are provided by Asp223, Asp247, and Asp251. 281–293 (GSAPDIAGQGIAN) is a binding site for NAD(+).

The protein belongs to the isocitrate and isopropylmalate dehydrogenases family. LeuB type 1 subfamily. Homodimer. Requires Mg(2+) as cofactor. Mn(2+) serves as cofactor.

It localises to the cytoplasm. The catalysed reaction is (2R,3S)-3-isopropylmalate + NAD(+) = 4-methyl-2-oxopentanoate + CO2 + NADH. It functions in the pathway amino-acid biosynthesis; L-leucine biosynthesis; L-leucine from 3-methyl-2-oxobutanoate: step 3/4. Catalyzes the oxidation of 3-carboxy-2-hydroxy-4-methylpentanoate (3-isopropylmalate) to 3-carboxy-4-methyl-2-oxopentanoate. The product decarboxylates to 4-methyl-2 oxopentanoate. This chain is 3-isopropylmalate dehydrogenase, found in Chromohalobacter salexigens (strain ATCC BAA-138 / DSM 3043 / CIP 106854 / NCIMB 13768 / 1H11).